A 163-amino-acid polypeptide reads, in one-letter code: Cytochrome b6-f complex subunit 4 (163 aa).

Transmembrane regions (helical) follow at residues 36 to 56 (LLYI…GLAV), 95 to 115 (LLGV…PFLE), and 131 to 151 (TVFL…TLPI).

Belongs to the cytochrome b family. PetD subfamily. The 4 large subunits of the cytochrome b6-f complex are cytochrome b6, subunit IV (17 kDa polypeptide, petD), cytochrome f and the Rieske protein, while the 4 small subunits are petG, petL, petM and petN. The complex functions as a dimer.

The protein resides in the plastid. Its subcellular location is the chloroplast thylakoid membrane. Its function is as follows. Component of the cytochrome b6-f complex, which mediates electron transfer between photosystem II (PSII) and photosystem I (PSI), cyclic electron flow around PSI, and state transitions. This chain is Cytochrome b6-f complex subunit 4, found in Phalaenopsis aphrodite subsp. formosana (Moth orchid).